We begin with the raw amino-acid sequence, 382 residues long: Intermediate transcription factor 3 large subunit (382 aa).

This sequence belongs to the orthopoxvirus OPG150 family. Heterodimerizes with protein A8 to form the virus intermediate transcription factor (VITF)-3.

Acts with RNA polymerase to initiate transcription from intermediate gene promoters. The polypeptide is Intermediate transcription factor 3 large subunit (OPG150) (Bos taurus (Bovine)).